Reading from the N-terminus, the 694-residue chain is Cyclic nucleotide-gated channel alpha-3 (694 aa).

Composition is skewed to polar residues over residues 1-11 and 112-123; these read MAKINTQYSHP and SQESNAQANVGS. 2 disordered regions span residues 1–24 and 109–152; these read MAKINTQYSHPSRTHLKVKTSDRD and EVSS…EEKK. At 1-170 the chain is on the cytoplasmic side; it reads MAKINTQYSH…VDPSSNLYYR (170 aa). The chain crosses the membrane as a helical span at residues 171-192; the sequence is WLTAIALPVFYNWYLLICRACF. The Extracellular portion of the chain corresponds to 193–198; sequence DELQSE. The chain crosses the membrane as a helical span at residues 199-219; it reads YLMLWLVLDYSADVLYVLDVL. Topologically, residues 220–246 are cytoplasmic; that stretch reads VRARTGFLEQGLMVSDTNRLWQHYKTT. The chain crosses the membrane as a helical span at residues 247–266; that stretch reads TQFKLDVLSLVPTDLAYLKV. The Extracellular segment spans residues 267-270; it reads GTNY. A helical transmembrane segment spans residues 271–288; sequence PEVRFNRLLKFSRLFEFF. Topologically, residues 289 to 298 are cytoplasmic; the sequence is DRTETRTNYP. Residues 298 to 406 are ion conduction pathway; the sequence is PNMFRIGNLV…GNVGSMISNM (109 aa). A helical membrane pass occupies residues 299–321; sequence NMFRIGNLVLYILIIIHWNACIY. The Extracellular segment spans residues 322–347; sequence FAISKFIGFGTDSWVYPNISIPEHGR. Asn339 carries an N-linked (GalNAc...) asparagine glycan. Helical transmembrane passes span 348–378 and 379–403; these read LSRKYIYSLYWSTLTLTTIGETPPPVKDEEY and LFVVVDFLVGVLIFATIVGNVGSMI. The interval 365–368 is selectivity filter; sequence TIGE. Residues 404–694 lie on the Cytoplasmic side of the membrane; that stretch reads SNMNASRAEF…DATKTEDKQQ (291 aa). A C-linker region spans residues 408 to 485; the sequence is ASRAEFQAKI…TLKKVRIFQD (78 aa). The segment at 488–608 is cyclic nucleotide-binding domain; sequence AGLLVELVLK…EEKGRQILMK (121 aa). Residues Gly548, Glu549, Ser551, Arg564, Thr565, and Asp609 each coordinate 3',5'-cyclic GMP. Residues 626 to 669 are a coiled coil; that stretch reads LEEKVEQLGSSLDTLQTRFARLLAEYNATQMKMKQRLSQLESQV. Residues 662-694 are disordered; it reads LSQLESQVKGGGDKPLADGEVPGDATKTEDKQQ.

Belongs to the cyclic nucleotide-gated cation channel (TC 1.A.1.5) family. CNGA3 subfamily. In terms of assembly, forms heterotetrameric channels composed of CNGA3 and CNGB3 subunits with 3:1 stoichiometry. Prominently expressed in retina.

It is found in the cell membrane. The catalysed reaction is Ca(2+)(in) = Ca(2+)(out). It carries out the reaction Na(+)(in) = Na(+)(out). The enzyme catalyses K(+)(in) = K(+)(out). It catalyses the reaction NH4(+)(in) = NH4(+)(out). The catalysed reaction is Rb(+)(in) = Rb(+)(out). It carries out the reaction Li(+)(in) = Li(+)(out). The enzyme catalyses Cs(+)(in) = Cs(+)(out). Its activity is regulated as follows. Inhibited by L-cis-diltiazem. Functionally, pore-forming subunit of the cone cyclic nucleotide-gated channel. Mediates cone photoresponses at bright light converting transient changes in intracellular cGMP levels into electrical signals. In the dark, cGMP levels are high and keep the channel open enabling a steady inward current carried by Na(+) and Ca(2+) ions that leads to membrane depolarization and neurotransmitter release from synaptic terminals. Upon photon absorption cGMP levels decline leading to channel closure and membrane hyperpolarization that ultimately slows neurotransmitter release and signals the presence of light, the end point of the phototransduction cascade. Pore-forming subunit of the gustatory cyclic nucleotide-gated channel. In the taste buds, may sense oral extracellular pH and conduct ion currents that modulate the excitability of taste cells. Conducts cGMP- and cAMP-gated ion currents, with permeability for monovalent and divalent cations. The protein is Cyclic nucleotide-gated channel alpha-3 of Homo sapiens (Human).